The chain runs to 130 residues: uncharacterized protein (130 aa).

This is an uncharacterized protein from Pasteurella multocida (strain Pm70).